We begin with the raw amino-acid sequence, 406 residues long: 11-beta-hydroxysteroid dehydrogenase type 2 (406 aa).

82-111 (TRAVLITGCDSGFGKETAKKLDAMGFTVLA) serves as a coordination point for NAD(+). S219 is a substrate binding site. The active-site Proton acceptor is the Y232. The tract at residues 379-406 (GQPGATPAPDTAQDNPNPNPDPSLVGAR) is disordered.

It belongs to the short-chain dehydrogenases/reductases (SDR) family. As to quaternary structure, interacts with ligand-free cytoplasmic NR3C2. In terms of tissue distribution, highly expressed in the kidney.

Its subcellular location is the microsome. The protein localises to the endoplasmic reticulum. It carries out the reaction an 11beta-hydroxysteroid + NAD(+) = an 11-oxosteroid + NADH + H(+). The catalysed reaction is corticosterone + NAD(+) = 11-dehydrocorticosterone + NADH + H(+). It catalyses the reaction cortisol + NAD(+) = cortisone + NADH + H(+). The enzyme catalyses 11beta,17beta-dihydroxyandrost-4-ene-3-one + NAD(+) = 17beta-hydroxyandrost-4-ene-3,11-dione + NADH + H(+). It carries out the reaction 11beta-hydroxyandrost-4-ene-3,17-dione + NAD(+) = androst-4-ene-3,11,17-trione + NADH + H(+). Its pathway is steroid metabolism. Its activity is regulated as follows. Inhibited by carbenoloxone. Catalyzes the conversion of biologically active 11beta-hydroxyglucocorticoids (11beta-hydroxysteroid) such as corticosterone, to inactive 11-ketoglucocorticoids (11-oxosteroid) such as 11-dehydrocorticosterone, in the presence of NAD(+). Functions as a dehydrogenase (oxidase), thereby decreasing the concentration of active glucocorticoids, thus protecting the nonselective mineralocorticoid receptor from occupation by glucocorticoids. Plays an important role in maintaining glucocorticoids balance during preimplantation and protects the fetus from excessive maternal corticosterone exposure. Catalyzes the oxidation of 11beta-hydroxytestosterone (11beta,17beta-dihydroxyandrost-4-ene-3-one) to 11-ketotestosterone (17beta-hydroxyandrost-4-ene-3,11-dione), a major bioactive androgen. Catalyzes the conversion of 11beta-hydroxyandrostenedione (11beta-hydroxyandrost-4-ene-3,17-dione) to 11-ketoandrostenedione (androst-4-ene-3,11,17-trione), which can be further metabolized to 11-ketotestosterone. Converts 7-beta-25-dihydroxycholesterol to 7-oxo-25-hydroxycholesterol in vitro. 7-beta-25-dihydroxycholesterol (not 7-oxo-25-hydroxycholesterol) acts as a ligand for the G-protein-coupled receptor (GPCR) Epstein-Barr virus-induced gene 2 (EBI2) and may thereby regulate immune cell migration. May protect ovulating oocytes and fertilizing spermatozoa from the adverse effects of cortisol. In Oryctolagus cuniculus (Rabbit), this protein is 11-beta-hydroxysteroid dehydrogenase type 2 (HSD11B2).